We begin with the raw amino-acid sequence, 507 residues long: ATP synthase subunit alpha, mitochondrial (507 aa).

171–178 (GDRQTGKT) serves as a coordination point for ATP.

The protein belongs to the ATPase alpha/beta chains family. F-type ATPases have 2 components, CF(1) - the catalytic core - and CF(0) - the membrane proton channel. CF(1) has five subunits: alpha(3), beta(3), gamma(1), delta(1), epsilon(1). CF(0) has three main subunits: a, b and c.

The protein localises to the mitochondrion. Its subcellular location is the mitochondrion inner membrane. Functionally, mitochondrial membrane ATP synthase (F(1)F(0) ATP synthase or Complex V) produces ATP from ADP in the presence of a proton gradient across the membrane which is generated by electron transport complexes of the respiratory chain. F-type ATPases consist of two structural domains, F(1) - containing the extramembraneous catalytic core, and F(0) - containing the membrane proton channel, linked together by a central stalk and a peripheral stalk. During catalysis, ATP synthesis in the catalytic domain of F(1) is coupled via a rotary mechanism of the central stalk subunits to proton translocation. Subunits alpha and beta form the catalytic core in F(1). Rotation of the central stalk against the surrounding alpha(3)beta(3) subunits leads to hydrolysis of ATP in three separate catalytic sites on the beta subunits. Subunit alpha does not bear the catalytic high-affinity ATP-binding sites. This Raphanus sativus (Radish) protein is ATP synthase subunit alpha, mitochondrial (ATPA).